We begin with the raw amino-acid sequence, 277 residues long: Caspase-3 (277 aa).

Methionine 1 carries the N-acetylmethionine modification. Propeptides lie at residues 1–9 (MENNKTSVD) and 10–28 (SKSINNFEVKTIHGSKSVD). An N6-acetyllysine modification is found at lysine 11. Serine 26 is modified (phosphoserine). Catalysis depends on residues histidine 121 and cysteine 163. Residue cysteine 163 is modified to S-nitrosocysteine; in inhibited form.

Belongs to the peptidase C14A family. As to quaternary structure, heterotetramer that consists of two anti-parallel arranged heterodimers, each one formed by a 17 kDa (p17) and a 12 kDa (p12) subunit. Interacts with BIRC6/bruce. Cleavage by granzyme B, caspase-6, caspase-8 and caspase-10 generates the two active subunits. Additional processing of the propeptides is likely due to the autocatalytic activity of the activated protease. Active heterodimers between the small subunit of caspase-7 protease and the large subunit of caspase-3 also occur and vice versa. In terms of processing, S-nitrosylated on its catalytic site cysteine in unstimulated cell lines and denitrosylated upon activation of the Fas apoptotic pathway, associated with an increase in intracellular caspase activity. Fas therefore activates caspase-3 not only by inducing the cleavage of the caspase zymogen to its active subunits, but also by stimulating the denitrosylation of its active site thiol. Post-translationally, ubiquitinated by BIRC6; this activity is inhibited by DIABLO/SMAC. As to expression, highest expression in spleen, lung, liver, kidney and heart. Lower expression in brain, skeletal muscle and testis.

The protein localises to the cytoplasm. It catalyses the reaction Strict requirement for an Asp residue at positions P1 and P4. It has a preferred cleavage sequence of Asp-Xaa-Xaa-Asp-|- with a hydrophobic amino-acid residue at P2 and a hydrophilic amino-acid residue at P3, although Val or Ala are also accepted at this position.. Its activity is regulated as follows. Inhibited by BIRC6; following inhibition of BIRC6-caspase binding by DIABLO/SMAC, BIRC6 is subjected to caspase cleavage, leading to an increase in active caspases. Functionally, thiol protease that acts as a major effector caspase involved in the execution phase of apoptosis. Following cleavage and activation by initiator caspases (CASP8, CASP9 and/or CASP10), mediates execution of apoptosis by catalyzing cleavage of many proteins. At the onset of apoptosis, it proteolytically cleaves poly(ADP-ribose) polymerase PARP1 at a '216-Asp-|-Gly-217' bond. Cleaves and activates sterol regulatory element binding proteins (SREBPs) between the basic helix-loop-helix leucine zipper domain and the membrane attachment domain. Cleaves and activates caspase-6, -7 and -9 (CASP6, CASP7 and CASP9, respectively). Cleaves and inactivates interleukin-18 (IL18). Triggers cell adhesion in sympathetic neurons through RET cleavage. Cleaves IL-1 beta between an Asp and an Ala, releasing the mature cytokine which is involved in a variety of inflammatory processes. Cleaves and inhibits serine/threonine-protein kinase AKT1 in response to oxidative stress. Acts as an inhibitor of type I interferon production during virus-induced apoptosis by mediating cleavage of antiviral proteins CGAS, IRF3 and MAVS, thereby preventing cytokine overproduction. Also involved in pyroptosis by mediating cleavage and activation of gasdermin-E (GSDME). Cleaves XRCC4 and phospholipid scramblase proteins XKR4, XKR8 and XKR9, leading to promote phosphatidylserine exposure on apoptotic cell surface. Cleaves BIRC6 following inhibition of BIRC6-caspase binding by DIABLO/SMAC. This is Caspase-3 (Casp3) from Mus musculus (Mouse).